The chain runs to 191 residues: Protein GrpE (191 aa).

This sequence belongs to the GrpE family. As to quaternary structure, homodimer.

The protein localises to the cytoplasm. Participates actively in the response to hyperosmotic and heat shock by preventing the aggregation of stress-denatured proteins, in association with DnaK and GrpE. It is the nucleotide exchange factor for DnaK and may function as a thermosensor. Unfolded proteins bind initially to DnaJ; upon interaction with the DnaJ-bound protein, DnaK hydrolyzes its bound ATP, resulting in the formation of a stable complex. GrpE releases ADP from DnaK; ATP binding to DnaK triggers the release of the substrate protein, thus completing the reaction cycle. Several rounds of ATP-dependent interactions between DnaJ, DnaK and GrpE are required for fully efficient folding. This is Protein GrpE from Nitratidesulfovibrio vulgaris (strain ATCC 29579 / DSM 644 / CCUG 34227 / NCIMB 8303 / VKM B-1760 / Hildenborough) (Desulfovibrio vulgaris).